Here is a 539-residue protein sequence, read N- to C-terminus: Netrin-G1 (539 aa).

The signal sequence occupies residues 1 to 28; it reads MYLSRFLSIHALWVTVSSVMQPYPLVWG. Cystine bridges form between Cys-33–Cys-50, Cys-72–Cys-92, and Cys-80–Cys-88. The Laminin N-terminal domain occupies 46 to 296; sequence DYMACQPEST…AISDIKVRGR (251 aa). The tract at residues 80-91 is NGL discriminant loop I; the sequence is CAMGNPYMCNNE. An N-linked (GlcNAc...) asparagine glycan is attached at Asn-133. Cys-182 and Cys-206 are disulfide-bonded. The interval 208–214 is NGL discriminant loop II; it reads EEYSTGY. An NGL discriminant loop III region spans residues 273–275; sequence EIF. 15 cysteine pairs are disulfide-bonded: Cys-297–Cys-306, Cys-299–Cys-315, Cys-317–Cys-326, Cys-329–Cys-354, Cys-364–Cys-373, Cys-366–Cys-384, Cys-387–Cys-396, Cys-399–Cys-417, Cys-420–Cys-432, Cys-422–Cys-438, Cys-440–Cys-449, Cys-452–Cys-462, Cys-467–Cys-480, Cys-474–Cys-486, and Cys-488–Cys-497. 3 Laminin EGF-like domains span residues 297–356, 364–419, and 420–469; these read CKCN…TCIP, CECF…VCIE, and CYCN…VCDN. N-linked (GlcNAc...) asparagine glycosylation is present at Asn-320. An N-linked (GlcNAc...) asparagine glycan is attached at Asn-406. Asn-433 is a glycosylation site (N-linked (GlcNAc...) asparagine). Residue Ser-510 is the site of GPI-anchor amidated serine attachment. Residues 511 to 539 constitute a propeptide, removed in mature form; that stretch reads DSGQGAPPHGSPALLLLTTLLGTASPLVF.

In terms of assembly, interacts with NGL1. Post-translationally, N-glycosylated. Highly expressed in the thalamus, with very low expression, if any, in other tissues.

It localises to the cell membrane. Involved in controlling patterning and neuronal circuit formation at the laminar, cellular, subcellular and synaptic levels. Promotes neurite outgrowth of both axons and dendrites. The polypeptide is Netrin-G1 (NTNG1) (Homo sapiens (Human)).